The sequence spans 153 residues: Ribosomal RNA large subunit methyltransferase H (153 aa).

S-adenosyl-L-methionine contacts are provided by residues leucine 70, glycine 102, and 121–126 (LSRMTF).

The protein belongs to the RNA methyltransferase RlmH family. As to quaternary structure, homodimer.

The protein localises to the cytoplasm. It catalyses the reaction pseudouridine(1915) in 23S rRNA + S-adenosyl-L-methionine = N(3)-methylpseudouridine(1915) in 23S rRNA + S-adenosyl-L-homocysteine + H(+). Functionally, specifically methylates the pseudouridine at position 1915 (m3Psi1915) in 23S rRNA. In Geobacter sulfurreducens (strain ATCC 51573 / DSM 12127 / PCA), this protein is Ribosomal RNA large subunit methyltransferase H.